The following is a 2207-amino-acid chain: Kinetochore-associated protein 1 (2207 aa).

Phosphothreonine is present on T13. S15 bears the Phosphoserine mark. The disordered stretch occupies residues 1024–1045 (EAAQAEHKHRGPPGPTPARGTH).

Interacts with ZW10. This interaction is required for stable association with the kinetochore. Component of the RZZ complex composed of KNTC1/ROD, ZW10 and ZWILCH.

It is found in the cytoplasm. The protein localises to the nucleus. It localises to the chromosome. Its subcellular location is the centromere. The protein resides in the kinetochore. It is found in the cytoskeleton. The protein localises to the spindle. In terms of biological role, essential component of the mitotic checkpoint, which prevents cells from prematurely exiting mitosis. Required for the assembly of the dynein-dynactin and MAD1-MAD2 complexes onto kinetochores. Its function related to the spindle assembly machinery is proposed to depend on its association in the mitotic RZZ complex. The protein is Kinetochore-associated protein 1 (Kntc1) of Mus musculus (Mouse).